We begin with the raw amino-acid sequence, 61 residues long: MAELKITQVRSTIGARWKQRESLRTLGLRKIRQSVVREDNAQTRGLIKTVHHLVEVEEVKA.

Belongs to the universal ribosomal protein uL30 family. In terms of assembly, part of the 50S ribosomal subunit.

The protein is Large ribosomal subunit protein uL30 of Mycolicibacterium gilvum (strain PYR-GCK) (Mycobacterium gilvum (strain PYR-GCK)).